The sequence spans 535 residues: Ribonuclease Y (535 aa).

The chain crosses the membrane as a helical span at residues 4–24 (IILAMVCALIGLIIGYVAISM). A disordered region spans residues 107–145 (TDRASSLDRKDENLSNKEKMLDSKEQSLTDKSRHINERE). The 61-residue stretch at 225–285 (TITTVHLPDD…IRREIARMTL (61 aa)) folds into the KH domain. The region spanning 351–444 (VLRHSVEVGK…VAAADALSSA (94 aa)) is the HD domain.

It belongs to the RNase Y family.

It is found in the cell membrane. Endoribonuclease that initiates mRNA decay. This Streptococcus agalactiae serotype Ia (strain ATCC 27591 / A909 / CDC SS700) protein is Ribonuclease Y.